We begin with the raw amino-acid sequence, 287 residues long: Seed leukoagglutinin (287 aa).

The N-terminal stretch at 1–29 (MATSNSKPTQVLLATFLTFFFLLLNNVNS) is a signal peptide. Tyrosine 74 serves as a coordination point for N-acetyl-alpha-neuraminyl-(2-&gt;3)-beta-D-galactosyl-(1-&gt;4)-beta-D-glucose. Asparagine 90 is a glycosylation site (N-linked (GlcNAc...) (paucimannose) asparagine). Residues aspartate 116, serine 133, and lysine 136 each coordinate N-acetyl-alpha-neuraminyl-(2-&gt;3)-beta-D-galactosyl-(1-&gt;4)-beta-D-glucose. N-linked (GlcNAc...) (paucimannose) asparagine glycosylation occurs at asparagine 142. Residues glutamate 156 and aspartate 158 each coordinate Mn(2+). Ca(2+) contacts are provided by aspartate 158, tyrosine 160, aspartate 166, and aspartate 169. The N-acetyl-alpha-neuraminyl-(2-&gt;3)-beta-D-galactosyl-(1-&gt;4)-beta-D-glucose site is built by tyrosine 160 and aspartate 166. Mn(2+)-binding residues include aspartate 169 and histidine 174. N-linked (GlcNAc...) (high mannose) asparagine; partial glycosylation occurs at asparagine 208. N-linked (GlcNAc...) (paucimannose) asparagine; partial glycosylation is present at asparagine 220. Glutamate 253 contacts N-acetyl-alpha-neuraminyl-(2-&gt;3)-beta-D-galactosyl-(1-&gt;4)-beta-D-glucose. Residues 279–287 (NVHIARYTA) constitute a propeptide, removed in mature form.

This sequence belongs to the leguminous lectin family. As to quaternary structure, homodimer; disulfide-linked. Dimer of homodimers. Post-translationally, the glycosylation on N-90 is determined to by of the high mannose type in PubMed:26003537, while PubMed:27720757 found a paucimannose at this position. Processed at its C-terminus.

Functionally, sialic acid-binding lectin recognizing oligosaccharides containing terminal sialic acid linked via alpha-2,3 bond to penultimate galactose residues. Binds the trisaccharide sequence Neu5Ac-alpha-2,3-Gal-beta-1,4-GlcNAc. Binds fetuin when fully glycosylated but not when the high mannose-type glycans are removed, although the secondary structure is virtually unaffected by deglycosylation of the high mannose-type glycans. The lectin activity may depend on the presence of a single GlcNAc attached to N-90. In Maackia amurensis (Amur maackia), this protein is Seed leukoagglutinin.